A 79-amino-acid chain; its full sequence is Translational regulator CsrA (79 aa).

It belongs to the CsrA/RsmA family. As to quaternary structure, homodimer; the beta-strands of each monomer intercalate to form a hydrophobic core, while the alpha-helices form wings that extend away from the core.

Its subcellular location is the cytoplasm. In terms of biological role, a translational regulator that binds mRNA to regulate translation initiation and/or mRNA stability. Usually binds in the 5'-UTR at or near the Shine-Dalgarno sequence preventing ribosome-binding, thus repressing translation. Its main target seems to be the major flagellin gene, while its function is anatagonized by FliW. This Geobacter sulfurreducens (strain ATCC 51573 / DSM 12127 / PCA) protein is Translational regulator CsrA.